Here is a 387-residue protein sequence, read N- to C-terminus: 3-ketoacyl-CoA thiolase (387 aa).

Cysteine 91 (acyl-thioester intermediate) is an active-site residue. Catalysis depends on proton acceptor residues histidine 343 and cysteine 373.

This sequence belongs to the thiolase-like superfamily. Thiolase family. In terms of assembly, heterotetramer of two alpha chains (FadB) and two beta chains (FadA).

It localises to the cytoplasm. The enzyme catalyses an acyl-CoA + acetyl-CoA = a 3-oxoacyl-CoA + CoA. Its pathway is lipid metabolism; fatty acid beta-oxidation. Catalyzes the final step of fatty acid oxidation in which acetyl-CoA is released and the CoA ester of a fatty acid two carbons shorter is formed. The chain is 3-ketoacyl-CoA thiolase from Shewanella baltica (strain OS155 / ATCC BAA-1091).